The primary structure comprises 159 residues: RNA pyrophosphohydrolase (159 aa).

The region spanning 6 to 149 (GFRPNVGIIL…KREVYRRALK (144 aa)) is the Nudix hydrolase domain. The short motif at 38-59 (GGINARETPEEALFRELNEEVG) is the Nudix box element.

Belongs to the Nudix hydrolase family. RppH subfamily. Requires a divalent metal cation as cofactor.

Functionally, accelerates the degradation of transcripts by removing pyrophosphate from the 5'-end of triphosphorylated RNA, leading to a more labile monophosphorylated state that can stimulate subsequent ribonuclease cleavage. The sequence is that of RNA pyrophosphohydrolase from Stutzerimonas stutzeri (strain A1501) (Pseudomonas stutzeri).